A 265-amino-acid chain; its full sequence is Indole-3-glycerol phosphate synthase (265 aa).

It belongs to the TrpC family.

The enzyme catalyses 1-(2-carboxyphenylamino)-1-deoxy-D-ribulose 5-phosphate + H(+) = (1S,2R)-1-C-(indol-3-yl)glycerol 3-phosphate + CO2 + H2O. Its pathway is amino-acid biosynthesis; L-tryptophan biosynthesis; L-tryptophan from chorismate: step 4/5. In Chromobacterium violaceum (strain ATCC 12472 / DSM 30191 / JCM 1249 / CCUG 213 / NBRC 12614 / NCIMB 9131 / NCTC 9757 / MK), this protein is Indole-3-glycerol phosphate synthase.